We begin with the raw amino-acid sequence, 223 residues long: uncharacterized protein (223 aa).

Helical transmembrane passes span 28 to 48 (LSNT…GLIT), 59 to 79 (LIVQ…ITLA), 88 to 108 (AFNQ…MFFI), 128 to 148 (IVGL…VWLS), and 176 to 196 (AWAI…YMIV).

Its subcellular location is the cell membrane. This is an uncharacterized protein from Mycoplasma pneumoniae (strain ATCC 29342 / M129 / Subtype 1) (Mycoplasmoides pneumoniae).